The chain runs to 308 residues: GTP-binding protein RAD (308 aa).

A compositionally biased stretch (gly residues) spans 1–16 (MTLNGGGSGAGGSRGG). Positions 1–88 (MTLNGGGSGA…SLSSGGSDSD (88 aa)) are disordered. Position 24 is an omega-N-methylarginine (R24). S26 carries the post-translational modification Phosphoserine. Low complexity predominate over residues 48 to 68 (QAALTPGALTAAAAGTGTQGP). GTP contacts are provided by residues 98–105 (GAPGVGKS) and 203–206 (NKSD). The tract at residues 278 to 297 (AKRFLGRIVARNSRKMAFRA) is calmodulin-binding.

It belongs to the small GTPase superfamily. RGK family. In terms of assembly, interacts with calmodulin preferentially in the inactive, GDP-bound form. Binds CAMKII which is capable of phosphorylating RAD in vitro. Interacts with CAMK2D. Interacts with CACNB2; interaction may be involved in beta-adrenergic regulation of heart rate and contractile force. Interaction with CACNB2 regulates the trafficking of CACNA1C to the cell membrane. Most abundantly expressed in the heart. Also found in the skeletal muscle and lung. Lesser amounts in placenta and kidney. Also detected in adipose tissue. Overexpressed in muscle of type II diabetic humans.

The protein localises to the cell membrane. In terms of biological role, may regulate basal voltage-dependent L-type Ca(2+) currents and be required for beta-adrenergic augmentation of Ca(2+) influx in cardiomyocytes, thereby regulating increases in heart rate and contractile force. May play an important role in cardiac antiarrhythmia via the strong suppression of voltage-gated L-type Ca(2+) currents. Regulates voltage-dependent L-type calcium channel subunit alpha-1C trafficking to the cell membrane. Inhibits cardiac hypertrophy through the calmodulin-dependent kinase II (CaMKII) pathway. Inhibits phosphorylation and activation of CAMK2D. In Homo sapiens (Human), this protein is GTP-binding protein RAD (RRAD).